The following is a 942-amino-acid chain: Nuclear receptor coactivator 7 (942 aa).

At methionine 1 the chain carries N-acetylmethionine. The span at 1–12 (MDTKEEKKERKQ) shows a compositional bias: basic and acidic residues. Residues 1 to 46 (MDTKEEKKERKQSYFARLKKKKQAKQNAETASAVATRTHTGKEDNN) form a disordered region. Residues 4-29 (KEEKKERKQSYFARLKKKKQAKQNAE) adopt a coiled-coil conformation. Residues 25-38 (KQNAETASAVATRT) show a composition bias toward polar residues. The residue at position 89 (serine 89) is a Phosphoserine. The LysM domain occupies 114–157 (MEYTAGNQDTLNSIALKFNITPNKLVELNKLFTHTIVPGQVLFV). Phosphothreonine is present on threonine 134. The segment at 161–188 (NSPSSTLRLSSSSPGATVSPSSSDAEYD) is disordered. Residues 162–183 (SPSSTLRLSSSSPGATVSPSSS) show a composition bias toward low complexity. Serine 179, serine 183, serine 208, serine 209, and serine 211 each carry phosphoserine. Positions 324-416 (KFKSINKEKR…ENFLGEDDDF (93 aa)) are disordered. Positions 356–368 (GHTPTKPSGSSVS) are enriched in polar residues. Positions 369–381 (EKLKKLDSSRETS) are enriched in basic and acidic residues. Phosphoserine is present on residues serine 441, serine 500, and serine 502. The TLDc domain occupies 781 to 942 (ALLENMHIEQ…VQDLEVWAFD (162 aa)).

The protein belongs to the OXR1 family. Interacts with ESR1, ESR2A, ESR2B, THRB, PPARG and RARA in a ligand-inducible manner. Interacts with the heterodimer AHR-ARNT. As to expression, highly expressed in brain. Weakly expressed in mammary gland, ovary, uterus, prostate, stomach, bladder, spinal cord and pancreas. Expressed in cancer cell line.

The protein resides in the nucleus. Functionally, enhances the transcriptional activities of several nuclear receptors. Involved in the coactivation of different nuclear receptors, such as ESR1, THRB, PPARG and RARA. This chain is Nuclear receptor coactivator 7 (NCOA7), found in Homo sapiens (Human).